Here is a 330-residue protein sequence, read N- to C-terminus: tRNA pseudouridine synthase B (330 aa).

Catalysis depends on D42, which acts as the Nucleophile.

The protein belongs to the pseudouridine synthase TruB family. Type 1 subfamily.

It carries out the reaction uridine(55) in tRNA = pseudouridine(55) in tRNA. Its function is as follows. Responsible for synthesis of pseudouridine from uracil-55 in the psi GC loop of transfer RNAs. The chain is tRNA pseudouridine synthase B from Lactococcus lactis subsp. cremoris (strain MG1363).